A 509-amino-acid polypeptide reads, in one-letter code: ATP synthase subunit alpha 1 (509 aa).

Residue 172 to 179 (GDRQTGKT) participates in ATP binding.

It belongs to the ATPase alpha/beta chains family. As to quaternary structure, F-type ATPases have 2 components, CF(1) - the catalytic core - and CF(0) - the membrane proton channel. CF(1) has five subunits: alpha(3), beta(3), gamma(1), delta(1), epsilon(1). CF(0) has four main subunits: a(1), b(1), b'(1) and c(9-12).

Its subcellular location is the cell inner membrane. It catalyses the reaction ATP + H2O + 4 H(+)(in) = ADP + phosphate + 5 H(+)(out). Produces ATP from ADP in the presence of a proton gradient across the membrane. The alpha chain is a regulatory subunit. In Dinoroseobacter shibae (strain DSM 16493 / NCIMB 14021 / DFL 12), this protein is ATP synthase subunit alpha 1.